A 1020-amino-acid chain; its full sequence is Carbamoyl phosphate synthase arginine-specific large chain (1020 aa).

The interval 1 to 401 (MPKNNAIHSI…ATLKAIASLE (401 aa)) is carboxyphosphate synthetic domain. 12 residues coordinate ATP: Arg129, Arg169, Gly175, Gly176, Gln208, Ile210, Glu215, Gly241, Ile242, His243, Gln284, and Glu298. Positions 133 to 327 (KTLMKRLHQP…IAKIAADIAI (195 aa)) constitute an ATP-grasp 1 domain. Gln284, Glu298, and Asn300 together coordinate Mg(2+). Mn(2+) is bound by residues Gln284, Glu298, and Asn300. Oligomerization domain stretches follow at residues 402–542 (IDPK…FGQT) and 402–544 (IDPK…QTNE). Carbamoyl phosphate synthetic domain stretches follow at residues 543–927 (NESH…ADSY) and 544–927 (ESHP…ADSY). Residues 669–858 (ADCLRLLKIA…LAQLATRLIL (190 aa)) enclose the ATP-grasp 2 domain. The ATP site is built by Arg705, Gln744, Leu746, Glu750, Gly775, Val776, His777, Ser778, and Gln818. Residues Gln818 and Asn831 each contribute to the Mg(2+) site. The Mn(2+) site is built by Gln818 and Asn831. The 94-residue stretch at 927–1020 (YHLETWQTVD…LAVTPTPATI (94 aa)) folds into the MGS-like domain. Positions 928–1020 (HLETWQTVDG…LAVTPTPATI (93 aa)) are allosteric domain.

This sequence belongs to the CarB family. As to quaternary structure, composed of two chains; the small (or glutamine) chain promotes the hydrolysis of glutamine to ammonia, which is used by the large (or ammonia) chain to synthesize carbamoyl phosphate. Tetramer of heterodimers (alpha,beta)4. Requires Mg(2+) as cofactor. Mn(2+) is required as a cofactor.

The catalysed reaction is hydrogencarbonate + L-glutamine + 2 ATP + H2O = carbamoyl phosphate + L-glutamate + 2 ADP + phosphate + 2 H(+). It catalyses the reaction hydrogencarbonate + NH4(+) + 2 ATP = carbamoyl phosphate + 2 ADP + phosphate + 2 H(+). It participates in amino-acid biosynthesis; L-arginine biosynthesis; carbamoyl phosphate from bicarbonate: step 1/1. In terms of biological role, large subunit of the glutamine-dependent carbamoyl phosphate synthetase (CPSase). CPSase catalyzes the formation of carbamoyl phosphate from the ammonia moiety of glutamine, carbonate, and phosphate donated by ATP, constituting the first step of the biosynthetic pathway leading to arginine and/or urea. The large subunit (synthetase) binds the substrates ammonia (free or transferred from glutamine from the small subunit), hydrogencarbonate and ATP and carries out an ATP-coupled ligase reaction, activating hydrogencarbonate by forming carboxy phosphate which reacts with ammonia to form carbamoyl phosphate. This is Carbamoyl phosphate synthase arginine-specific large chain from Lactiplantibacillus plantarum (strain ATCC BAA-793 / NCIMB 8826 / WCFS1) (Lactobacillus plantarum).